An 874-amino-acid chain; its full sequence is Alanine--tRNA ligase (874 aa).

4 residues coordinate Zn(2+): His564, His568, Cys665, and His669.

The protein belongs to the class-II aminoacyl-tRNA synthetase family. The cofactor is Zn(2+).

The protein localises to the cytoplasm. The catalysed reaction is tRNA(Ala) + L-alanine + ATP = L-alanyl-tRNA(Ala) + AMP + diphosphate. Catalyzes the attachment of alanine to tRNA(Ala) in a two-step reaction: alanine is first activated by ATP to form Ala-AMP and then transferred to the acceptor end of tRNA(Ala). Also edits incorrectly charged Ser-tRNA(Ala) and Gly-tRNA(Ala) via its editing domain. The protein is Alanine--tRNA ligase of Paraburkholderia phymatum (strain DSM 17167 / CIP 108236 / LMG 21445 / STM815) (Burkholderia phymatum).